Consider the following 527-residue polypeptide: Ribonuclease Y 2 (527 aa).

A helical membrane pass occupies residues 2–22 (IAMIATAIIGIVAGGGLGWAL). In terms of domain architecture, HD spans 339–432 (QYFHCGEVGW…VIAADAVSGA (94 aa)).

Belongs to the RNase Y family.

The protein localises to the cell membrane. Its function is as follows. Endoribonuclease that initiates mRNA decay. The polypeptide is Ribonuclease Y 2 (Bdellovibrio bacteriovorus (strain ATCC 15356 / DSM 50701 / NCIMB 9529 / HD100)).